The following is a 557-amino-acid chain: Dihydroxy-acid dehydratase (557 aa).

Cys50 is a [2Fe-2S] cluster binding site. Asp82 is a Mg(2+) binding site. Cys123 contacts [2Fe-2S] cluster. Mg(2+)-binding residues include Asp124 and Lys125. Lys125 carries the post-translational modification N6-carboxylysine. Cys195 contributes to the [2Fe-2S] cluster binding site. Glu447 is a binding site for Mg(2+). Ser473 (proton acceptor) is an active-site residue.

This sequence belongs to the IlvD/Edd family. Homodimer. Requires [2Fe-2S] cluster as cofactor. It depends on Mg(2+) as a cofactor.

The enzyme catalyses (2R)-2,3-dihydroxy-3-methylbutanoate = 3-methyl-2-oxobutanoate + H2O. It carries out the reaction (2R,3R)-2,3-dihydroxy-3-methylpentanoate = (S)-3-methyl-2-oxopentanoate + H2O. It functions in the pathway amino-acid biosynthesis; L-isoleucine biosynthesis; L-isoleucine from 2-oxobutanoate: step 3/4. Its pathway is amino-acid biosynthesis; L-valine biosynthesis; L-valine from pyruvate: step 3/4. Its function is as follows. Functions in the biosynthesis of branched-chain amino acids. Catalyzes the dehydration of (2R,3R)-2,3-dihydroxy-3-methylpentanoate (2,3-dihydroxy-3-methylvalerate) into 2-oxo-3-methylpentanoate (2-oxo-3-methylvalerate) and of (2R)-2,3-dihydroxy-3-methylbutanoate (2,3-dihydroxyisovalerate) into 2-oxo-3-methylbutanoate (2-oxoisovalerate), the penultimate precursor to L-isoleucine and L-valine, respectively. The chain is Dihydroxy-acid dehydratase from Nitrosomonas eutropha (strain DSM 101675 / C91 / Nm57).